Here is a 232-residue protein sequence, read N- to C-terminus: 5'-methylthioadenosine/S-adenosylhomocysteine nucleosidase (232 aa).

The active-site Proton acceptor is E12. Residues G78, M153, and 174–175 (ME) each bind substrate. D198 serves as the catalytic Proton donor.

Belongs to the PNP/UDP phosphorylase family. MtnN subfamily.

It carries out the reaction S-adenosyl-L-homocysteine + H2O = S-(5-deoxy-D-ribos-5-yl)-L-homocysteine + adenine. The catalysed reaction is S-methyl-5'-thioadenosine + H2O = 5-(methylsulfanyl)-D-ribose + adenine. It catalyses the reaction 5'-deoxyadenosine + H2O = 5-deoxy-D-ribose + adenine. It functions in the pathway amino-acid biosynthesis; L-methionine biosynthesis via salvage pathway; S-methyl-5-thio-alpha-D-ribose 1-phosphate from S-methyl-5'-thioadenosine (hydrolase route): step 1/2. Catalyzes the irreversible cleavage of the glycosidic bond in both 5'-methylthioadenosine (MTA) and S-adenosylhomocysteine (SAH/AdoHcy) to adenine and the corresponding thioribose, 5'-methylthioribose and S-ribosylhomocysteine, respectively. Also cleaves 5'-deoxyadenosine, a toxic by-product of radical S-adenosylmethionine (SAM) enzymes, into 5-deoxyribose and adenine. This Hydrogenovibrio crunogenus (strain DSM 25203 / XCL-2) (Thiomicrospira crunogena) protein is 5'-methylthioadenosine/S-adenosylhomocysteine nucleosidase.